Consider the following 622-residue polypeptide: Presenilin-A (622 aa).

The segment covering 1 to 16 (MKENEDEINKTDEKYK) has biased composition (basic and acidic residues). Disordered stretches follow at residues 1–65 (MKEN…NLEN) and 132–160 (VSEQNSDECGSKVDKDLDEDDDDDDDETE). The Cytoplasmic portion of the chain corresponds to 1-168 (MKENEDEINK…TEVPELVDYS (168 aa)). The segment covering 21–62 (SNNGNNKNKNNNNNNNNNNNNNNNNNNNNNNNNNNNNNGNSN) has biased composition (low complexity). Over residues 147 to 160 (DLDEDDDDDDDETE) the composition is skewed to acidic residues. The chain crosses the membrane as a helical span at residues 169 to 189 (EMIVSILYPVCITMVIVVLAI). Topologically, residues 190 to 227 (RAISSSTSKNSQIVEISNDNSGGNGDSSSGADKMVFDS) are lumenal. The chain crosses the membrane as a helical span at residues 228-248 (VVNSLIFLAVIILSTTIMVVL). The Cytoplasmic portion of the chain corresponds to 249 to 265 (YKFKLMKALYAWLMGTS). A helical transmembrane segment spans residues 266–286 (ILLLGVFGGFLFLILLAYLNL). Topologically, residues 287–289 (GLD) are lumenal. A helical membrane pass occupies residues 290-310 (YVTFVIVVWNFSVGGIVCIFW). Residue Y311 is a topological domain, cytoplasmic. Residues 312-332 (SPKLLNQGYLISISVLMALFF) form a helical membrane-spanning segment. The Lumenal portion of the chain corresponds to 333 to 341 (SRLPDWTTW). The chain crosses the membrane as a helical span at residues 342 to 362 (GILSIVSIYDIFAVLCPGGPL). Residue D351 is part of the active site. Over 363-538 (RILIETAQKR…SYVKPKQSIR (176 aa)) the chain is Cytoplasmic. The segment at 419 to 477 (NNNNNEDENKNNTEDGNNNNNKNKNNNNNNNNRIENENGAENSSENGSITPPPTIPNFI) is disordered. Residues 432–466 (EDGNNNNNKNKNNNNNNNNRIENENGAENSSENGS) show a composition bias toward low complexity. The helical transmembrane segment at 539-559 (LGLGDFVFYSVLIGKAASYQI) threads the bilayer. D543 is an active-site residue. Topologically, residues 560–562 (TTV) are lumenal. A helical transmembrane segment spans residues 563 to 583 (FTVFIAIITGLFLTLILLAVF). Residues 584–588 (RRALP) lie on the Cytoplasmic side of the membrane. The short motif at 588 to 590 (PAL) is the PAL element. An intramembrane region (helical) is located at residues 589–609 (ALPMSIIFGIIVFFLTFKILI). At 610-622 (QYIYFLGENQIFV) the chain is on the cytoplasmic side.

It belongs to the peptidase A22A family. Homodimer. Component of the gamma-secretase complex, a complex composed of a presenilin homodimer, nicastrin, aph1 and pen2.

It is found in the endoplasmic reticulum membrane. The protein resides in the golgi apparatus membrane. Probable catalytic subunit of the gamma-secretase complex, an endoprotease complex that catalyzes the intramembrane cleavage of integral membrane proteins such as Notch receptors. Requires the other members of the gamma-secretase complex to have a protease activity. This chain is Presenilin-A (psenA), found in Dictyostelium discoideum (Social amoeba).